Here is a 467-residue protein sequence, read N- to C-terminus: Argininosuccinate lyase (467 aa).

3 residues coordinate 2-(N(omega)-L-arginino)succinate: S27, N114, and T159. H160 (proton acceptor) is an active-site residue. Residue S281 is the Proton donor of the active site. N289, Y321, Q326, and K329 together coordinate 2-(N(omega)-L-arginino)succinate.

It belongs to the lyase 1 family. Argininosuccinate lyase subfamily. Homotetramer.

The catalysed reaction is 2-(N(omega)-L-arginino)succinate = fumarate + L-arginine. Its pathway is amino-acid biosynthesis; L-arginine biosynthesis; L-arginine from L-ornithine and carbamoyl phosphate: step 3/3. It participates in nitrogen metabolism; urea cycle; L-arginine and fumarate from (N(omega)-L-arginino)succinate: step 1/1. The sequence is that of Argininosuccinate lyase (ASL) from Aquarana catesbeiana (American bullfrog).